The following is a 1918-amino-acid chain: Diacylglycerol kinase eta (1918 aa).

The span at 1-10 shows a compositional bias: basic and acidic residues; sequence MAHLKLDTLH. Positions 1–37 are disordered; it reads MAHLKLDTLHVQRSPRGSRRSSPSSGRSSACSSGSIS. Residues 20–37 are compositionally biased toward low complexity; it reads RSSPSSGRSSACSSGSIS. The PH domain occupies 82–175; the sequence is AIIKEGFLLK…WLGGLKTATA (94 aa). Phorbol-ester/DAG-type zinc fingers lie at residues 195–245 and 268–319; these read HHHW…IANC and PHQW…AVAC. The DAGKc domain maps to 350–486; it reads GNFSPLLVFV…DRWSIMVFEK (137 aa). Disordered regions lie at residues 783-805, 1017-1067, 1177-1212, and 1380-1399; these read GANI…NTPT, TTLC…DDNP, PNTI…GDSI, and ERDK…TEEA. The segment covering 1177-1189 has biased composition (polar residues); it reads PNTILTTSTSPTK. Residues 1855 to 1918 form the SAM domain; the sequence is WSVNEVVTWL…LQAIKDLSEN (64 aa).

Belongs to the eukaryotic diacylglycerol kinase family.

Its subcellular location is the cytoplasm. The enzyme catalyses a 1,2-diacyl-sn-glycerol + ATP = a 1,2-diacyl-sn-glycero-3-phosphate + ADP + H(+). Its function is as follows. Phosphorylates diacylglycerol (DAG) to generate phosphatidic acid (PA). In Drosophila erecta (Fruit fly), this protein is Diacylglycerol kinase eta.